Consider the following 175-residue polypeptide: Protein UPS1, mitochondrial (175 aa).

Positions 1 to 80 (MVLLHKSTHI…RGITETWIIE (80 aa)) are required for mitochondrial targeting. Positions 2–172 (VLLHKSTHIF…VIQKLEEARN (171 aa)) constitute a PRELI/MSF1 domain. 4 residues coordinate a 1,2-diacyl-sn-glycero-3-phosphate: Y26, K58, K148, and N152.

The protein belongs to the slowmo family. Interacts with MDM35. Found associated with a 170 kDa complex.

It is found in the mitochondrion inner membrane. The protein resides in the mitochondrion intermembrane space. In terms of biological role, required for maintenance of normal mitochondrial morphology. Required for PCP1-dependent processing of MGM1. The UPS1:MDM35 complex mediates the transfer of phosphatidic acid (PA) between liposomes and probably functions as a PA transporter across the mitochondrion intermembrane space. Phosphatidic acid release requires dissociation of the UPS1:MDM35 complex. Phosphatidic acid import is required for cardiolipin (CL) synthesis in the mitochondrial inner membrane. With UPS2, controls the level of cardiolipin in mitochondria. Cardiolipin is a unique phospholipid with four fatty acid chains and is present mainly in the mitochondrial inner membrane where it stabilizes the electron transport chain supercomplex between complexes III and IV through direct interaction of their subunits. This is Protein UPS1, mitochondrial (UPS1) from Saccharomyces cerevisiae (strain ATCC 204508 / S288c) (Baker's yeast).